The chain runs to 886 residues: Protein suppressor of hairy wing (886 aa).

Disordered regions lie at residues 24-62 (SVSPSKDKRPTRMKLLNNLSASSPQTYPPKTDKRSGIKG) and 167-211 (DEVV…KNSG). Residues 184-201 (VTEEEEEEEEDDLDEEGD) show a composition bias toward acidic residues. The C2H2-type 1; atypical zinc-finger motif lies at 221 to 243 (HVCGKCYKTFRRLMSLKKHLEFC). The C2H2-type 2 zinc finger occupies 291–314 (INCPDCPKSFKTQTSYERHIFITH). The C2H2-type 3; atypical zinc finger occupies 320 to 342 (YPCSICNANLRSEALLKLHEEQH). 9 C2H2-type zinc fingers span residues 349–367 (YACKICGKDFTRSYHLKRH), 381–403 (MSCKVCDRVFYRLDNLRSHLKHH), 414–436 (YMCHVCKNCFYSLSTLNIHIRTH), 442–464 (FDCDLCDKKLSALVALKKHRRYH), 470–492 (YSCTVCNQAFAVKEVLNRHMKRH), 498–520 (HKCEECGKSFIQATQLRTHSKTH), 524–546 (FACDMCEEKFKTEKQLERHVKEH), 554–578 (FSCTECKRHFRNTAQLKQHMDAGDH), and 600–623 (TDCAICDKNFDSSETLRKHIRSVH). Residues 571–587 (QHMDAGDHSEKSGEKPQ) are compositionally biased toward basic and acidic residues. Residues 571–594 (QHMDAGDHSEKSGEKPQRAKRSST) are disordered.

Its subcellular location is the nucleus. Its function is as follows. Component of the gypsy chromatin insulator complex which is required for the function of the gypsy chromatin insulator and other endogenous chromatin insulators. Chromatin insulators are regulatory elements which establish independent domains of transcriptional activity within eukaryotic genomes. Insulators have two defining properties; they can block the communication between an enhancer and a promoter when placed between them and can also buffer transgenes from position effect variegation (PEV). Insulators are proposed to structure the chromatin fiber into independent domains of differing transcriptional potential by promoting the formation of distinct chromatin loops. This chromatin looping may involve the formation of insulator bodies, where homotypic interactions between individual subunits of the insulator complex could promote the clustering of widely spaced insulators at the nuclear periphery. Within the gypsy insulator complex, this protein binds specifically to a region of the gypsy element located 3' of the 5' long terminal repeat (LTR), and may also mediate interaction with other endogenous insulators at sites distinct from those recognized by Cp190. Cooperates with pita and cliff to recruit Cp190 and regulate insulator function at the front-ultraabdominal (Fub) boundary. The chain is Protein suppressor of hairy wing (su(Hw)) from Drosophila ananassae (Fruit fly).